The chain runs to 441 residues: ATP-dependent protease ATPase subunit HslU (441 aa).

ATP is bound by residues Ile-18, 60–65 (GVGKTE), Asp-254, Glu-319, and Arg-391.

This sequence belongs to the ClpX chaperone family. HslU subfamily. A double ring-shaped homohexamer of HslV is capped on each side by a ring-shaped HslU homohexamer. The assembly of the HslU/HslV complex is dependent on binding of ATP.

The protein resides in the cytoplasm. Functionally, ATPase subunit of a proteasome-like degradation complex; this subunit has chaperone activity. The binding of ATP and its subsequent hydrolysis by HslU are essential for unfolding of protein substrates subsequently hydrolyzed by HslV. HslU recognizes the N-terminal part of its protein substrates and unfolds these before they are guided to HslV for hydrolysis. The protein is ATP-dependent protease ATPase subunit HslU of Shewanella loihica (strain ATCC BAA-1088 / PV-4).